Consider the following 225-residue polypeptide: NAD(P)H-hydrate epimerase (225 aa).

Residues 9–209 (MQTIDNYTVE…DIGLLTPQDF (201 aa)) form the YjeF N-terminal domain. A (6S)-NADPHX-binding site is contributed by 57–61 (NNGAD). Residues Asn-58 and Asp-119 each coordinate K(+). (6S)-NADPHX is bound by residues 123–129 (GTGLNNL) and Asp-152. Thr-155 provides a ligand contact to K(+).

The protein belongs to the NnrE/AIBP family. It depends on K(+) as a cofactor.

The catalysed reaction is (6R)-NADHX = (6S)-NADHX. It catalyses the reaction (6R)-NADPHX = (6S)-NADPHX. In terms of biological role, catalyzes the epimerization of the S- and R-forms of NAD(P)HX, a damaged form of NAD(P)H that is a result of enzymatic or heat-dependent hydration. This is a prerequisite for the S-specific NAD(P)H-hydrate dehydratase to allow the repair of both epimers of NAD(P)HX. The sequence is that of NAD(P)H-hydrate epimerase from Leuconostoc sp. (strain C2).